The primary structure comprises 1001 residues: Serine/threonine-protein kinase TAO1-B (1001 aa).

Residues 28–281 enclose the Protein kinase domain; it reads FSDLREIGHG…SDELLKHMFV (254 aa). Residues 34 to 42 and Lys-57 contribute to the ATP site; that span reads IGHGSFGAV. Asp-151 acts as the Proton acceptor in catalysis. Disordered stretches follow at residues 324 to 435 and 567 to 586; these read PAVE…YRNR and KEEL…EWLS. A compositionally biased stretch (low complexity) spans 350–370; that stretch reads SNQSIPSMSISASSQSSSVNS. 2 stretches are compositionally biased toward basic and acidic residues: residues 375 to 388 and 577 to 586; these read SDDK…EGDH and PKKEKQEWLS. Coiled-coil stretches lie at residues 458–651 and 754–877; these read SELR…EHAM and KAVL…EIEA. The segment at 911–1001 is disordered; that stretch reads SHNPTGGPGP…ISNGSHMSYT (91 aa). A compositionally biased stretch (low complexity) spans 921 to 930; sequence HWGHPMAGPP. 2 stretches are compositionally biased toward polar residues: residues 949 to 967 and 975 to 1001; these read GSVQ…NSPQ and GGRT…MSYT.

This sequence belongs to the protein kinase superfamily. STE Ser/Thr protein kinase family. STE20 subfamily.

The protein resides in the cytoplasm. The enzyme catalyses L-seryl-[protein] + ATP = O-phospho-L-seryl-[protein] + ADP + H(+). The catalysed reaction is L-threonyl-[protein] + ATP = O-phospho-L-threonyl-[protein] + ADP + H(+). In terms of biological role, serine/threonine-protein kinase involved in various processes such as p38/mapk14 stress-activated MAPK cascade, DNA damage response and regulation of cytoskeleton stability. Acts as an activator of the p38/MAPK14 stress-activated MAPK cascade by mediating phosphorylation and subsequent activation of upstream MAP kinase kinases. In response to DNA damage, involved in the G2/M transition DNA damage checkpoint by activating the p38/MAPK14 stress-activated MAPK cascade. In Xenopus laevis (African clawed frog), this protein is Serine/threonine-protein kinase TAO1-B (taok1-b).